The chain runs to 387 residues: Fetuin-B (387 aa).

An N-terminal signal peptide occupies residues 1–18 (MNVLLLLVLCTLAMGCGA). Cystatin fetuin-B-type domains follow at residues 25-139 (AARP…YNCT) and 150-258 (MTCP…VTCS). Residue asparagine 37 is glycosylated (N-linked (GlcNAc...) asparagine). Disulfide bonds link cysteine 94/cysteine 105, cysteine 118/cysteine 138, cysteine 152/cysteine 155, cysteine 217/cysteine 225, and cysteine 238/cysteine 257. Asparagine 137 carries an N-linked (GlcNAc...) asparagine glycan. Residues 264–306 (APTPRGENATVNQRPANPSKTEELQQQNTAPTNSPTKAVPKGS) are disordered. The N-linked (GlcNAc...) asparagine glycan is linked to asparagine 271. The span at 272–299 (ATVNQRPANPSKTEELQQQNTAPTNSPT) shows a compositional bias: polar residues. Threonine 292 and threonine 295 each carry an O-linked (GalNAc...) threonine glycan. Phosphoserine is present on serine 320. A disordered region spans residues 366-387 (KEQRSAECPGPAQKGYPFILPS).

It belongs to the fetuin family. In terms of tissue distribution, liver and testis.

The protein localises to the secreted. Protease inhibitor required for egg fertilization. Required to prevent premature zona pellucida hardening before fertilization, probably by inhibiting the protease activity of ASTL, a protease that mediates the cleavage of ZP2 and triggers zona pellucida hardening. The polypeptide is Fetuin-B (FETUB) (Bos taurus (Bovine)).